The primary structure comprises 510 residues: 2,3-bisphosphoglycerate-independent phosphoglycerate mutase (510 aa).

2 residues coordinate Mn(2+): aspartate 11 and serine 61. The active-site Phosphoserine intermediate is the serine 61. Substrate contacts are provided by residues histidine 124, 154–155 (RD), arginine 185, arginine 191, 260–263 (RPDR), and lysine 333. Mn(2+) contacts are provided by aspartate 398, histidine 402, aspartate 439, histidine 440, and histidine 457.

Belongs to the BPG-independent phosphoglycerate mutase family. In terms of assembly, monomer. Mn(2+) serves as cofactor.

The catalysed reaction is (2R)-2-phosphoglycerate = (2R)-3-phosphoglycerate. Its pathway is carbohydrate degradation; glycolysis; pyruvate from D-glyceraldehyde 3-phosphate: step 3/5. In terms of biological role, catalyzes the interconversion of 2-phosphoglycerate and 3-phosphoglycerate. This is 2,3-bisphosphoglycerate-independent phosphoglycerate mutase from Mycoplasma mobile (strain ATCC 43663 / 163K / NCTC 11711) (Mesomycoplasma mobile).